The chain runs to 391 residues: 8-amino-7-oxononanoate synthase (391 aa).

108 to 109 (GF) provides a ligand contact to pyridoxal 5'-phosphate. H133 is a substrate binding site. S180, H208, and T236 together coordinate pyridoxal 5'-phosphate. N6-(pyridoxal phosphate)lysine is present on K239. Residue T353 participates in substrate binding.

This sequence belongs to the class-II pyridoxal-phosphate-dependent aminotransferase family. BioF subfamily. Homodimer. Pyridoxal 5'-phosphate serves as cofactor.

It carries out the reaction 6-carboxyhexanoyl-[ACP] + L-alanine + H(+) = (8S)-8-amino-7-oxononanoate + holo-[ACP] + CO2. It participates in cofactor biosynthesis; biotin biosynthesis. Functionally, catalyzes the decarboxylative condensation of pimeloyl-[acyl-carrier protein] and L-alanine to produce 8-amino-7-oxononanoate (AON), [acyl-carrier protein], and carbon dioxide. In Thermosipho melanesiensis (strain DSM 12029 / CIP 104789 / BI429), this protein is 8-amino-7-oxononanoate synthase.